A 247-amino-acid polypeptide reads, in one-letter code: Adenosylcobinamide-GDP ribazoletransferase (247 aa).

The next 6 helical transmembrane spans lie at isoleucine 34–alanine 54, cysteine 59–phenylalanine 79, glycine 113–leucine 133, methionine 138–tyrosine 158, valine 171–alanine 193, and isoleucine 194–isoleucine 214.

The protein belongs to the CobS family. It depends on Mg(2+) as a cofactor.

It is found in the cell inner membrane. The catalysed reaction is alpha-ribazole + adenosylcob(III)inamide-GDP = adenosylcob(III)alamin + GMP + H(+). The enzyme catalyses alpha-ribazole 5'-phosphate + adenosylcob(III)inamide-GDP = adenosylcob(III)alamin 5'-phosphate + GMP + H(+). The protein operates within cofactor biosynthesis; adenosylcobalamin biosynthesis; adenosylcobalamin from cob(II)yrinate a,c-diamide: step 7/7. Joins adenosylcobinamide-GDP and alpha-ribazole to generate adenosylcobalamin (Ado-cobalamin). Also synthesizes adenosylcobalamin 5'-phosphate from adenosylcobinamide-GDP and alpha-ribazole 5'-phosphate. This chain is Adenosylcobinamide-GDP ribazoletransferase, found in Citrobacter koseri (strain ATCC BAA-895 / CDC 4225-83 / SGSC4696).